A 634-amino-acid chain; its full sequence is Sodium-dependent neutral amino acid transporter B(0)AT1 (634 aa).

The Cytoplasmic portion of the chain corresponds to Met1–Tyr41. Ser17 is modified (phosphoserine). The chain crosses the membrane as a helical span at residues Met42–Cys62. The Extracellular portion of the chain corresponds to Gln63–Gly67. The chain crosses the membrane as a helical span at residues Gly68–Leu88. The Cytoplasmic segment spans residues Glu89 to Leu120. Residues Thr121 to Phe141 traverse the membrane as a helical segment. Residues Asn142–Ser192 are Extracellular-facing. N-linked (GlcNAc...) asparagine glycans are attached at residues Asn158 and Asn182. A helical membrane pass occupies residues Ile193–Ile213. Topologically, residues Arg214–Lys221 are cytoplasmic. A helical membrane pass occupies residues Ala222–Leu242. The Extracellular portion of the chain corresponds to Thr243–Trp268. Asn258 carries an N-linked (GlcNAc...) asparagine glycan. A helical transmembrane segment spans residues Leu269–Phe289. Residues Ser290–Val304 lie on the Cytoplasmic side of the membrane. Residues Ile305–Ile325 form a helical membrane-spanning segment. Residues Gly326–Ser413 are Extracellular-facing. 2 N-linked (GlcNAc...) asparagine glycosylation sites follow: Asn354 and Asn368. A helical transmembrane segment spans residues Pro414–Gly434. Residues Asn435–Glu456 are Cytoplasmic-facing. Residues Val457–Ser477 traverse the membrane as a helical segment. At Gly478 to Gly490 the chain is on the extracellular side. A helical membrane pass occupies residues Ser491–Val511. Topologically, residues Asp512–Gln531 are cytoplasmic. Residues Val532 to Val552 form a helical membrane-spanning segment. The Extracellular segment spans residues Glu553–Trp581. Residues Val582–Ile602 form a helical membrane-spanning segment. Topologically, residues Tyr603–Tyr634 are cytoplasmic. The residue at position 627 (Ser627) is a Phosphoserine.

It belongs to the sodium:neurotransmitter symporter (SNF) (TC 2.A.22) family. SLC6A19 subfamily. In terms of assembly, interacts in a tissue-specific manner with ACE2 in small intestine and with CLTRN in the kidney. Interacts with CLTRN; this interaction is required for trafficking of SLC6A19 to the plasma membrane and for its catalytic activation in kidneys. Interacts with ACE2; this interaction is required for trafficking of SLC6A19 to the plasma membrane and for its catalytic activation in intestine. Interacts with ANPEP; the interaction positively regulates its amino acid transporter activity. As to expression, robust expression in kidney and small intestine, with minimal expression in pancreas. Also expressed in stomach, liver, duodenum, ileocecum, colon and prostate. Not detected in testis, whole brain, cerebellum, fetal liver, spleen, skeletal muscle, uterus, heart or lung.

It is found in the cell membrane. The protein resides in the apical cell membrane. The enzyme catalyses L-alanine(in) + Na(+)(in) = L-alanine(out) + Na(+)(out). The catalysed reaction is L-cysteine(in) + Na(+)(in) = L-cysteine(out) + Na(+)(out). It carries out the reaction L-glutamine(in) + Na(+)(in) = L-glutamine(out) + Na(+)(out). It catalyses the reaction glycine(in) + Na(+)(in) = glycine(out) + Na(+)(out). The enzyme catalyses L-isoleucine(in) + Na(+)(in) = L-isoleucine(out) + Na(+)(out). The catalysed reaction is L-leucine(in) + Na(+)(in) = L-leucine(out) + Na(+)(out). It carries out the reaction L-methionine(in) + Na(+)(in) = L-methionine(out) + Na(+)(out). It catalyses the reaction L-phenylalanine(in) + Na(+)(in) = L-phenylalanine(out) + Na(+)(out). The enzyme catalyses L-serine(in) + Na(+)(in) = L-serine(out) + Na(+)(out). The catalysed reaction is L-tryptophan(in) + Na(+)(in) = L-tryptophan(out) + Na(+)(out). It carries out the reaction L-tyrosine(in) + Na(+)(in) = L-tyrosine(out) + Na(+)(out). It catalyses the reaction L-valine(in) + Na(+)(in) = L-valine(out) + Na(+)(out). Its function is as follows. Transporter that mediates resorption of neutral amino acids across the apical membrane of renal and intestinal epithelial cells. This uptake is sodium-dependent and chloride-independent. Requires CLTRN in kidney or ACE2 in intestine for cell surface expression and amino acid transporter activity. The chain is Sodium-dependent neutral amino acid transporter B(0)AT1 (SLC6A19) from Homo sapiens (Human).